A 102-amino-acid chain; its full sequence is Small ribosomal subunit protein uS10 (102 aa).

This sequence belongs to the universal ribosomal protein uS10 family. Part of the 30S ribosomal subunit.

Its function is as follows. Involved in the binding of tRNA to the ribosomes. The polypeptide is Small ribosomal subunit protein uS10 (Streptomyces griseus subsp. griseus (strain JCM 4626 / CBS 651.72 / NBRC 13350 / KCC S-0626 / ISP 5235)).